The following is a 213-amino-acid chain: UPF0329 protein ECU04_0110 (213 aa).

It belongs to the UPF0329 family.

This is UPF0329 protein ECU04_0110 from Encephalitozoon cuniculi (strain GB-M1) (Microsporidian parasite).